Consider the following 511-residue polypeptide: Bifunctional purine biosynthesis protein PurH (511 aa).

The MGS-like domain occupies 1–145; it reads MKKRALVSVS…KNHKFVSVIV (145 aa).

This sequence belongs to the PurH family.

It carries out the reaction (6R)-10-formyltetrahydrofolate + 5-amino-1-(5-phospho-beta-D-ribosyl)imidazole-4-carboxamide = 5-formamido-1-(5-phospho-D-ribosyl)imidazole-4-carboxamide + (6S)-5,6,7,8-tetrahydrofolate. The enzyme catalyses IMP + H2O = 5-formamido-1-(5-phospho-D-ribosyl)imidazole-4-carboxamide. Its pathway is purine metabolism; IMP biosynthesis via de novo pathway; 5-formamido-1-(5-phospho-D-ribosyl)imidazole-4-carboxamide from 5-amino-1-(5-phospho-D-ribosyl)imidazole-4-carboxamide (10-formyl THF route): step 1/1. It participates in purine metabolism; IMP biosynthesis via de novo pathway; IMP from 5-formamido-1-(5-phospho-D-ribosyl)imidazole-4-carboxamide: step 1/1. This is Bifunctional purine biosynthesis protein PurH from Bacillus cereus (strain 03BB102).